Consider the following 259-residue polypeptide: Isoepoxydon dehydrogenase patN (259 aa).

NADP(+)-binding residues include Asn-96 and Arg-125. Active-site proton donor residues include Ser-143 and Ser-144. The NADP(+) site is built by Tyr-158, Lys-162, and Ile-191. The active-site Proton acceptor is the Tyr-158. Lys-162 serves as the catalytic Lowers pKa of active site Tyr.

The protein belongs to the short-chain dehydrogenases/reductases (SDR) family.

It localises to the cytoplasm. It is found in the cytosol. The enzyme catalyses isoepoxydon + NADP(+) = phyllostine + NADPH + H(+). It functions in the pathway mycotoxin biosynthesis; patulin biosynthesis. Isoepoxydon dehydrogenase; part of the gene cluster that mediates the biosynthesis of patulin, an acetate-derived tetraketide mycotoxin produced by several fungal species that shows antimicrobial properties against several bacteria. PatN catalyzes the conversion of isoepoxydon into phyllostine. The pathway begins with the synthesis of 6-methylsalicylic acid by the polyketide synthase (PKS) patK via condensation of acetate and malonate units. The 6-methylsalicylic acid decarboxylase patG then catalyzes the decarboxylation of 6-methylsalicylic acid to yield m-cresol (also known as 3-methylphenol). These first reactions occur in the cytosol. The intermediate m-cresol is then transported into the endoplasmic reticulum where the cytochrome P450 monooxygenase patH converts it to m-hydroxybenzyl alcohol, which is further converted to gentisyl alcohol by the cytochrome P450 monooxygenase patI. The oxidoreductases patJ and patO further convert gentisyl alcohol to isoepoxydon in the vacuole. PatN catalyzes then the transformation of isoepoxydon into phyllostine. The cluster protein patF is responsible for the conversion from phyllostine to neopatulin whereas the alcohol dehydrogenase patD converts neopatulin to E-ascladiol. The steps between isoepoxydon and E-ascladiol occur in the cytosol, and E-ascladiol is probably secreted to the extracellular space by one of the cluster-specific transporters patC or patM. Finally, the secreted patulin synthase patE catalyzes the conversion of E-ascladiol to patulin. This is Isoepoxydon dehydrogenase patN from Aspergillus clavatus (strain ATCC 1007 / CBS 513.65 / DSM 816 / NCTC 3887 / NRRL 1 / QM 1276 / 107).